The chain runs to 192 residues: Pyridoxal 5'-phosphate synthase subunit PdxT (192 aa).

50-52 serves as a coordination point for L-glutamine; sequence GES. The active-site Nucleophile is the cysteine 82. L-glutamine-binding positions include arginine 109 and 136–137; that span reads IR. Residues histidine 172 and glutamate 174 each act as charge relay system in the active site.

This sequence belongs to the glutaminase PdxT/SNO family. As to quaternary structure, in the presence of PdxS, forms a dodecamer of heterodimers. Only shows activity in the heterodimer.

The enzyme catalyses aldehydo-D-ribose 5-phosphate + D-glyceraldehyde 3-phosphate + L-glutamine = pyridoxal 5'-phosphate + L-glutamate + phosphate + 3 H2O + H(+). The catalysed reaction is L-glutamine + H2O = L-glutamate + NH4(+). Its pathway is cofactor biosynthesis; pyridoxal 5'-phosphate biosynthesis. Its function is as follows. Catalyzes the hydrolysis of glutamine to glutamate and ammonia as part of the biosynthesis of pyridoxal 5'-phosphate. The resulting ammonia molecule is channeled to the active site of PdxS. This chain is Pyridoxal 5'-phosphate synthase subunit PdxT, found in Haemophilus influenzae (strain PittEE).